The chain runs to 142 residues: MRNFDLSPLMRQWIGFDKLANALQNAGESQSFPPYNIEKSDDNHYRITLALAGFRQEDLEIQLEGTRLSVKGTPEQPKEEKKWLHQGLMNQPFSLSFTLAENMEVSGATFVNGLLHIDLIRNEPEPIAAQRIAISERPALNS.

The region spanning Ala-26–Arg-137 is the sHSP domain.

It belongs to the small heat shock protein (HSP20) family. Homodimer. Forms homomultimers of about 100-150 subunits at optimal growth temperatures. Conformation changes to oligomers at high temperatures or high ionic concentrations. The decrease in size of the multimers is accompanied by an increase in chaperone activity.

It localises to the cytoplasm. Its function is as follows. Associates with aggregated proteins, together with IbpA, to stabilize and protect them from irreversible denaturation and extensive proteolysis during heat shock and oxidative stress. Aggregated proteins bound to the IbpAB complex are more efficiently refolded and reactivated by the ATP-dependent chaperone systems ClpB and DnaK/DnaJ/GrpE. Its activity is ATP-independent. This Shigella flexneri serotype 5b (strain 8401) protein is Small heat shock protein IbpB.